The primary structure comprises 508 residues: p-aminobenzoyl-glutamate transport protein (508 aa).

13 helical membrane passes run 30 to 50 (FLLF…LSAF), 85 to 105 (FSGF…GLAE), 121 to 139 (VNAR…FSHI), 140 to 159 (SSDA…FLAV), 164 to 184 (VAGL…NLLI), 211 to 231 (IDNW…GGLI), 261 to 281 (GLRI…LMVI), 303 to 323 (GIVP…GIAT), 343 to 363 (MAGF…FNWS), 382 to 402 (LSGI…CMFI), 405 to 425 (GSAI…LLGF), 439 to 459 (SSVL…GFLQ), and 479 to 499 (LIFL…GLPI).

Its subcellular location is the cell inner membrane. The enzyme catalyses N-(4-aminobenzoyl)-L-glutamate(in) + H(+)(in) = N-(4-aminobenzoyl)-L-glutamate(out) + H(+)(out). With respect to regulation, completely inhibited by 100 nM sodium azide and by the proton ionophore carbonyl cyanide m-chlorophenylhydrazone (CCCP). Is also strongly inhibited by 100 mM potassium fluoride. In terms of biological role, essential for aminobenzoyl-glutamate utilization. It catalyzes the concentration-dependent uptake of p-aminobenzoyl-glutamate (PABA-GLU) into the cell and allows accumulation of PABA-GLU to a concentration enabling AbgAB to catalyze cleavage into p-aminobenzoate and glutamate. It also seems to increase the sensitivity to low levels of aminobenzoyl-glutamate. May actually serve physiologically as a transporter for some other molecule, perhaps a dipeptide, and that it transports p-aminobenzoyl-glutamate as a secondary activity. The physiological role of abgABT should be clarified. In Escherichia coli (strain K12), this protein is p-aminobenzoyl-glutamate transport protein.